Here is a 109-residue protein sequence, read N- to C-terminus: UPF0449 protein C19orf25 homolog (109 aa).

A Phosphotyrosine modification is found at Y63.

Belongs to the UPF0449 family.

The protein is UPF0449 protein C19orf25 homolog of Rattus norvegicus (Rat).